The primary structure comprises 229 residues: Leucyl/phenylalanyl-tRNA--protein transferase (229 aa).

The protein belongs to the L/F-transferase family.

The protein localises to the cytoplasm. The catalysed reaction is N-terminal L-lysyl-[protein] + L-leucyl-tRNA(Leu) = N-terminal L-leucyl-L-lysyl-[protein] + tRNA(Leu) + H(+). It catalyses the reaction N-terminal L-arginyl-[protein] + L-leucyl-tRNA(Leu) = N-terminal L-leucyl-L-arginyl-[protein] + tRNA(Leu) + H(+). The enzyme catalyses L-phenylalanyl-tRNA(Phe) + an N-terminal L-alpha-aminoacyl-[protein] = an N-terminal L-phenylalanyl-L-alpha-aminoacyl-[protein] + tRNA(Phe). Functionally, functions in the N-end rule pathway of protein degradation where it conjugates Leu, Phe and, less efficiently, Met from aminoacyl-tRNAs to the N-termini of proteins containing an N-terminal arginine or lysine. The chain is Leucyl/phenylalanyl-tRNA--protein transferase from Desulforapulum autotrophicum (strain ATCC 43914 / DSM 3382 / VKM B-1955 / HRM2) (Desulfobacterium autotrophicum).